The sequence spans 400 residues: Aminomethyltransferase, mitochondrial (400 aa).

Substrate is bound by residues Glu-221, Arg-250, and Tyr-397.

It belongs to the GcvT family. Component of the glycine decarboxylase complex (GDC), which is composed of four proteins: P, T, L and H.

Its subcellular location is the mitochondrion. It catalyses the reaction N(6)-[(R)-S(8)-aminomethyldihydrolipoyl]-L-lysyl-[protein] + (6S)-5,6,7,8-tetrahydrofolate = N(6)-[(R)-dihydrolipoyl]-L-lysyl-[protein] + (6R)-5,10-methylene-5,6,7,8-tetrahydrofolate + NH4(+). Its function is as follows. The glycine cleavage system (glycine decarboxylase complex) catalyzes the degradation of glycine. The protein is Aminomethyltransferase, mitochondrial (GCV1) of Saccharomyces cerevisiae (strain ATCC 204508 / S288c) (Baker's yeast).